A 206-amino-acid polypeptide reads, in one-letter code: Superoxide dismutase [Mn] (206 aa).

H30, H78, D166, and H170 together coordinate Mn(2+).

This sequence belongs to the iron/manganese superoxide dismutase family. Homodimer. Mn(2+) is required as a cofactor.

The enzyme catalyses 2 superoxide + 2 H(+) = H2O2 + O2. Destroys superoxide anion radicals which are normally produced within the cells and which are toxic to biological systems. The protein is Superoxide dismutase [Mn] (sodA) of Chlamydia trachomatis serovar D (strain ATCC VR-885 / DSM 19411 / UW-3/Cx).